A 114-amino-acid polypeptide reads, in one-letter code: DNA-binding protein rrnAC3180 (114 aa).

The segment covering 1–11 has biased composition (acidic residues); that stretch reads MSGDPSEEELE. Positions 1–45 are disordered; the sequence is MSGDPSEEELEELRKKKMEQLKEQQGGEGEGQEAAQQQAEAQKQA. A compositionally biased stretch (basic and acidic residues) spans 12 to 22; it reads ELRKKKMEQLK. Positions 32-45 are enriched in low complexity; sequence QEAAQQQAEAQKQA.

This sequence belongs to the PDCD5 family.

This chain is DNA-binding protein rrnAC3180, found in Haloarcula marismortui (strain ATCC 43049 / DSM 3752 / JCM 8966 / VKM B-1809) (Halobacterium marismortui).